A 530-amino-acid chain; its full sequence is Putative ABC transporter ATP-binding protein SSO1893 (530 aa).

ABC transporter domains are found at residues 6–243 (IRDL…LGLE) and 282–516 (ILFA…EPPL). Residues 38–45 (GRSGSGKS) and 314–321 (GKNGSGKT) each bind ATP.

The protein belongs to the ABC transporter superfamily.

It localises to the cell membrane. Its function is as follows. Probably part of an ABC transporter complex. Responsible for energy coupling to the transport system. The protein is Putative ABC transporter ATP-binding protein SSO1893 of Saccharolobus solfataricus (strain ATCC 35092 / DSM 1617 / JCM 11322 / P2) (Sulfolobus solfataricus).